The sequence spans 1135 residues: Putative beta-hexosaminidase (1135 aa).

The N-terminal stretch at 1-23 (MKWVKSGVGILGILLTICHAVTS) is a signal peptide. Disordered stretches follow at residues 970 to 1082 (AHPP…LPGQ) and 1107 to 1135 (QMRGQGQIPQRTQGAAAGAGQSRIPQQAG). Positions 986–1003 (NMPPPFPPRPPFGPPMLP) are enriched in pro residues. Low complexity-rich tracts occupy residues 1004-1026 (PGQMRALGQQAGQALRGQGTALG) and 1043-1073 (TGQAAGTGVAGQTGQQPSTAGQGTQQGLPGQ).

This sequence belongs to the glycosyl hydrolase 20 family. As to expression, prismatic layer of shell (at protein level). Expressed primarily in the mantle with highest level in the mantle edge and lower level in the mantle pallium.

The protein resides in the secreted. It carries out the reaction Hydrolysis of terminal non-reducing N-acetyl-D-hexosamine residues in N-acetyl-beta-D-hexosaminides.. It participates in glycan degradation; chitin degradation. In Margaritifera margaritifera (Freshwater pearl mussel), this protein is Putative beta-hexosaminidase.